Here is a 402-residue protein sequence, read N- to C-terminus: MLKVEMLSTGDEVLHGQIVDTNAAWLADFFFHQGLPLSRRNTVGDNLDDLVTILRERSQHADVLIVNGGLGPTSDDLSALAAATAKGEGLVLHEAWLKEMERYFHERGRVMTPSNRKQAELPASAEFINNPVGTACGFAVQLNRCLMFFTPGVPSEFKVMVEHEILPRLRERFSLPQPPVCLRLTTFGRSESDLAQSLDTLQLPPGVTMGYRSSMPIIELKLTGPASEKQAMEKLWLDVKRVAGQSVIFEGTEGLPSQISRELQNRQFSLTLSEQFTGGLLALQLSRAGAPLLACEVVPSQEETLAQTAHWITERRANHFAGLALAVSGFENEHLNFALATPDGTFALRVRFSTTRYSLAIRQEVCAMMALNMLRRWLNGQDIASEHGWIEVVESMTLSSAL.

Belongs to the CinA family.

In Escherichia coli O17:K52:H18 (strain UMN026 / ExPEC), this protein is CinA-like protein.